A 716-amino-acid polypeptide reads, in one-letter code: Myogenesis-regulating glycosidase (716 aa).

Polar residues predominate over residues Met1–Ala11. Positions Met1–Leu26 are disordered. At Met1–Pro55 the chain is on the cytoplasmic side. Residues Leu56–Tyr76 traverse the membrane as a helical; Signal-anchor for type II membrane protein segment. The Extracellular portion of the chain corresponds to Tyr77–Ser716. Residues Asn239, Asn249, and Asn455 are each glycosylated (N-linked (GlcNAc...) asparagine). Catalysis depends on residues Asp462 and Glu465. The Proton donor role is filled by Asp527.

Belongs to the glycosyl hydrolase 31 family. As to quaternary structure, interacts with IGF2; this interaction is required for IGF2 secretion. In terms of tissue distribution, expressed in brain, liver, spleen, skeletal muscle, heart, lung and kidney. High expression is observed in the cerebellum, specifically in astrocytes. Highly expressed in skeletal muscle (at protein level).

It is found in the nucleus membrane. It localises to the endoplasmic reticulum membrane. Putative glycosidase. Promotes myogenesis by activating AKT signaling through the maturation and secretion of IGF2. This chain is Myogenesis-regulating glycosidase (Myorg), found in Mus musculus (Mouse).